A 182-amino-acid polypeptide reads, in one-letter code: Bifunctional protein PyrR (182 aa).

Positions 97 to 109 (VVLVDDVIFRGRT) match the PRPP-binding motif.

The protein belongs to the purine/pyrimidine phosphoribosyltransferase family. PyrR subfamily.

The enzyme catalyses UMP + diphosphate = 5-phospho-alpha-D-ribose 1-diphosphate + uracil. In terms of biological role, regulates the transcription of the pyrimidine nucleotide (pyr) operon in response to exogenous pyrimidines. Its function is as follows. Also displays a weak uracil phosphoribosyltransferase activity which is not physiologically significant. The polypeptide is Bifunctional protein PyrR (Synechococcus sp. (strain JA-2-3B'a(2-13)) (Cyanobacteria bacterium Yellowstone B-Prime)).